The sequence spans 574 residues: Tyrosinase (574 aa).

Residues His67, His95, His104, His275, His279, and His304 each contribute to the Cu cation site. A cross-link (2'-(S-cysteinyl)-histidine (Cys-His)) is located at residues 93 to 95; that stretch reads CTH.

It belongs to the tyrosinase family. Cu(2+) serves as cofactor.

The catalysed reaction is 2 L-dopa + O2 = 2 L-dopaquinone + 2 H2O. The enzyme catalyses L-tyrosine + O2 = L-dopaquinone + H2O. In terms of biological role, this is a copper-containing oxidase that functions in the formation of pigments such as melanins and other polyphenolic compounds. The chain is Tyrosinase (TYR) from Podospora anserina (Pleurage anserina).